The primary structure comprises 118 residues: Putative pterin-4-alpha-carbinolamine dehydratase (118 aa).

Belongs to the pterin-4-alpha-carbinolamine dehydratase family.

It carries out the reaction (4aS,6R)-4a-hydroxy-L-erythro-5,6,7,8-tetrahydrobiopterin = (6R)-L-erythro-6,7-dihydrobiopterin + H2O. The chain is Putative pterin-4-alpha-carbinolamine dehydratase from Pseudomonas entomophila (strain L48).